A 288-amino-acid chain; its full sequence is Hypersensitive-induced response protein-like protein 1 (288 aa).

Gly2 carries the N-myristoyl glycine lipid modification.

Positive regulator of hypersensitive response (HR)-like cell death. May be involved in potassium ion channel regulation. This is Hypersensitive-induced response protein-like protein 1 from Oryza sativa subsp. japonica (Rice).